Reading from the N-terminus, the 360-residue chain is Mitogen-activated protein kinase 1 (360 aa).

The residue at position 2 (A2) is an N-acetylalanine. Positions 25–313 (YTNLSYIGEG…VEQALAHPYL (289 aa)) constitute a Protein kinase domain. At S29 the chain carries Phosphoserine; by SGK1. ATP-binding positions include 31-39 (IGEGAYGMV) and K54. The active-site Proton acceptor is the D149. A Phosphothreonine; by MAP2K1 and MAP2K2 modification is found at T185. The short motif at 185-187 (TEY) is the TXY element. A Phosphotyrosine; by MAP2K1 and MAP2K2 modification is found at Y187. T190 is subject to Phosphothreonine; by autocatalysis. A phosphoserine mark is found at S246 and S248. A DNA-binding region spans residues 259-277 (KARNYLLSLPHKNKVPWNR). S284 is subject to Phosphoserine. The short motif at 318 to 322 (DPSDE) is the Cytoplasmic retention motif element. The short motif at 327–333 (APFKFDM) is the Nuclear translocation motif element.

It belongs to the protein kinase superfamily. CMGC Ser/Thr protein kinase family. MAP kinase subfamily. Binds both upstream activators and downstream substrates in multimolecular complexes. This interaction inhibits its tyrosine-kinase activity. Interacts with ADAM15, ARHGEF2, ARRB2, DAPK1 (via death domain), HSF4, IER3, IPO7, NISCH, SGK1, and isoform 1 of NEK2. Interacts (via phosphorylated form) with TPR (via C-terminal region and phosphorylated form); the interaction requires dimerization of MAPK1/ERK2 and increases following EGF stimulation. Interacts with MAP2K1. Interacts with DUSP6. Interacts (phosphorylated form) with CAV2 ('Tyr-19'-phosphorylated form); the interaction, promoted by insulin, leads to nuclear location and MAPK1 activation. Interacts with MORG1, PEA15 and MKNK2. MKNK2 isoform 1 binding prevents from dephosphorylation and inactivation. Interacts with DCC. The phosphorylated form interacts with PML (isoform PML-4). Interacts with STYX. Interacts with CDK2AP2. Interacts with CAVIN4. Interacts with DUSP7; the interaction enhances DUSP7 phosphatase activity. Interacts with GIT1; this interaction is necessary for MAPK1 localization to focal adhesions. Interacts with ZNF263. Interacts with phosphoglycerate kinase PGK1; the interaction is direct, occurs under hypoxic conditions, and promotes interaction between PGK1 and PIN1. In terms of assembly, (Microbial infection) Interacts with HIV-1 Nef through its SH3 domain. Mg(2+) serves as cofactor. In terms of processing, phosphorylated upon KIT and FLT3 signaling. Dually phosphorylated on Thr-185 and Tyr-187, which activates the enzyme. Undergoes regulatory phosphorylation on additional residues such as Ser-246 and Ser-248 in the kinase insert domain (KID) These phosphorylations, which are probably mediated by more than one kinase, are important for binding of MAPK1/ERK2 to importin-7 (IPO7) and its nuclear translocation. In addition, autophosphorylation of Thr-190 was shown to affect the subcellular localization of MAPK1/ERK2 as well. Ligand-activated ALK induces tyrosine phosphorylation. Dephosphorylated by PTPRJ at Tyr-187. Phosphorylation on Ser-29 by SGK1 results in its activation by enhancing its interaction with MAP2K1/MEK1 and MAP2K2/MEK2. DUSP3 and DUSP6 dephosphorylate specifically MAPK1/ERK2 and MAPK3/ERK1 whereas DUSP9 dephosphorylates a broader range of MAPKs. Dephosphorylated by DUSP1 and DUSP2 at Thr-185 and Tyr-187. Post-translationally, ISGylated. Ubiquitinated by TRIM15 via 'Lys-63'-linked ubiquitination; leading to activation. Deubiquitinated by CYLD.

It is found in the cytoplasm. Its subcellular location is the cytoskeleton. The protein localises to the spindle. The protein resides in the nucleus. It localises to the microtubule organizing center. It is found in the centrosome. Its subcellular location is the membrane. The protein localises to the caveola. The protein resides in the cell junction. It localises to the focal adhesion. It catalyses the reaction L-seryl-[protein] + ATP = O-phospho-L-seryl-[protein] + ADP + H(+). The enzyme catalyses L-threonyl-[protein] + ATP = O-phospho-L-threonyl-[protein] + ADP + H(+). With respect to regulation, phosphorylated by MAP2K1/MEK1 and MAP2K2/MEK2 on Thr-185 and Tyr-187 in response to external stimuli like insulin or NGF. Both phosphorylations are required for activity. This phosphorylation causes dramatic conformational changes, which enable full activation and interaction of MAPK1/ERK2 with its substrates. Phosphorylation on Ser-29 by SGK1 results in its activation by enhancing its interaction with MAP2K1/MEK1 and MAP2K2/MEK2. Dephosphorylated and inactivated by DUSP1, DUSP3, DUSP6 and DUSP9. Inactivated by pyrimidylpyrrole inhibitors. Functionally, serine/threonine kinase which acts as an essential component of the MAP kinase signal transduction pathway. MAPK1/ERK2 and MAPK3/ERK1 are the 2 MAPKs which play an important role in the MAPK/ERK cascade. They participate also in a signaling cascade initiated by activated KIT and KITLG/SCF. Depending on the cellular context, the MAPK/ERK cascade mediates diverse biological functions such as cell growth, adhesion, survival and differentiation through the regulation of transcription, translation, cytoskeletal rearrangements. The MAPK/ERK cascade also plays a role in initiation and regulation of meiosis, mitosis, and postmitotic functions in differentiated cells by phosphorylating a number of transcription factors. About 160 substrates have already been discovered for ERKs. Many of these substrates are localized in the nucleus, and seem to participate in the regulation of transcription upon stimulation. However, other substrates are found in the cytosol as well as in other cellular organelles, and those are responsible for processes such as translation, mitosis and apoptosis. Moreover, the MAPK/ERK cascade is also involved in the regulation of the endosomal dynamics, including lysosome processing and endosome cycling through the perinuclear recycling compartment (PNRC); as well as in the fragmentation of the Golgi apparatus during mitosis. The substrates include transcription factors (such as ATF2, BCL6, ELK1, ERF, FOS, HSF4 or SPZ1), cytoskeletal elements (such as CANX, CTTN, GJA1, MAP2, MAPT, PXN, SORBS3 or STMN1), regulators of apoptosis (such as BAD, BTG2, CASP9, DAPK1, IER3, MCL1 or PPARG), regulators of translation (such as EIF4EBP1 and FXR1) and a variety of other signaling-related molecules (like ARHGEF2, DCC, FRS2 or GRB10). Protein kinases (such as RAF1, RPS6KA1/RSK1, RPS6KA3/RSK2, RPS6KA2/RSK3, RPS6KA6/RSK4, SYK, MKNK1/MNK1, MKNK2/MNK2, RPS6KA5/MSK1, RPS6KA4/MSK2, MAPKAPK3 or MAPKAPK5) and phosphatases (such as DUSP1, DUSP4, DUSP6 or DUSP16) are other substrates which enable the propagation the MAPK/ERK signal to additional cytosolic and nuclear targets, thereby extending the specificity of the cascade. Mediates phosphorylation of TPR in response to EGF stimulation. May play a role in the spindle assembly checkpoint. Phosphorylates PML and promotes its interaction with PIN1, leading to PML degradation. Phosphorylates CDK2AP2. Phosphorylates phosphoglycerate kinase PGK1 under hypoxic conditions to promote its targeting to the mitochondrion and suppress the formation of acetyl-coenzyme A from pyruvate. Acts as a transcriptional repressor. Binds to a [GC]AAA[GC] consensus sequence. Repress the expression of interferon gamma-induced genes. Seems to bind to the promoter of CCL5, DMP1, IFIH1, IFITM1, IRF7, IRF9, LAMP3, OAS1, OAS2, OAS3 and STAT1. Transcriptional activity is independent of kinase activity. This is Mitogen-activated protein kinase 1 from Homo sapiens (Human).